The primary structure comprises 397 residues: Chorismate synthase (397 aa).

NADP(+) is bound by residues Arg40 and Arg46. Residues 129–131, 257–258, Gly302, 317–321, and Arg343 contribute to the FMN site; these read RAS, QA, and KPIAT.

Belongs to the chorismate synthase family. Homotetramer. FMNH2 is required as a cofactor.

The enzyme catalyses 5-O-(1-carboxyvinyl)-3-phosphoshikimate = chorismate + phosphate. Its pathway is metabolic intermediate biosynthesis; chorismate biosynthesis; chorismate from D-erythrose 4-phosphate and phosphoenolpyruvate: step 7/7. Its function is as follows. Catalyzes the anti-1,4-elimination of the C-3 phosphate and the C-6 proR hydrogen from 5-enolpyruvylshikimate-3-phosphate (EPSP) to yield chorismate, which is the branch point compound that serves as the starting substrate for the three terminal pathways of aromatic amino acid biosynthesis. This reaction introduces a second double bond into the aromatic ring system. The sequence is that of Chorismate synthase from Chlorobium phaeobacteroides (strain BS1).